Consider the following 138-residue polypeptide: Small ribosomal subunit protein bS6 (138 aa).

Over residues 97 to 121 (TEQSEMLKAEENRSERRERRDRPDN) the composition is skewed to basic and acidic residues. The tract at residues 97–138 (TEQSEMLKAEENRSERRERRDRPDNTDGSNENDSDSDNNADE) is disordered. Positions 126–138 (NENDSDSDNNADE) are enriched in acidic residues.

This sequence belongs to the bacterial ribosomal protein bS6 family.

Binds together with bS18 to 16S ribosomal RNA. The polypeptide is Small ribosomal subunit protein bS6 (Stutzerimonas stutzeri (strain A1501) (Pseudomonas stutzeri)).